We begin with the raw amino-acid sequence, 505 residues long: L-carnitine/gamma-butyrobetaine antiporter (505 aa).

12 helical membrane passes run 10 to 30 (IEPK…WLTV), 51 to 71 (WGWA…WLVF), 92 to 112 (IFMM…SIEI), 143 to 163 (GPLP…FFFV), 195 to 215 (FYLV…TPLV), 231 to 251 (LDAI…ACGL), 263 to 283 (SYLS…SFIM), 316 to 336 (WTVF…IFLA), 347 to 367 (LCFG…TVLG), 403 to 423 (LSTA…VTLI), 446 to 466 (LLVR…LLAL), and 475 to 495 (AIIA…LSFI).

It belongs to the BCCT transporter (TC 2.A.15) family. CaiT subfamily. As to quaternary structure, homotrimer.

It localises to the cell inner membrane. The catalysed reaction is 4-(trimethylamino)butanoate(in) + (R)-carnitine(out) = 4-(trimethylamino)butanoate(out) + (R)-carnitine(in). The protein operates within amine and polyamine metabolism; carnitine metabolism. In terms of biological role, catalyzes the exchange of L-carnitine for gamma-butyrobetaine. This chain is L-carnitine/gamma-butyrobetaine antiporter, found in Salmonella gallinarum (strain 287/91 / NCTC 13346).